The sequence spans 469 residues: Interstitial collagenase (469 aa).

The signal sequence occupies residues 1-19; it reads MHSFPPLLLLLFWGVVSHS. The propeptide at 20-99 is activation peptide; that stretch reads FPATLETQEQ…PRCGVPDVAQ (80 aa). Position 57 is a phosphoserine (serine 57). The Cysteine switch signature appears at 90-97; it reads PRCGVPDV. Cysteine 92 lines the Zn(2+) pocket. Positions 98–276 are metalloprotease; that stretch reads AQFVLTEGNP…VQPIGPQTPK (179 aa). A glycan (N-linked (GlcNAc...) asparagine) is linked at asparagine 120. Residues aspartate 124 and aspartate 158 each contribute to the Ca(2+) site. The Zn(2+) site is built by histidine 168 and aspartate 170. Residues aspartate 175, glycine 176, glycine 178, and asparagine 180 each coordinate Ca(2+). Histidine 183 provides a ligand contact to Zn(2+). Ca(2+)-binding residues include glycine 190, glycine 192, and aspartate 194. Histidine 196 is a binding site for Zn(2+). Aspartate 198, glutamate 199, and glutamate 201 together coordinate Ca(2+). Residue histidine 218 coordinates Zn(2+). The active site involves glutamate 219. Positions 222 and 228 each coordinate Zn(2+). Threonine 274 is subject to Phosphothreonine. Hemopexin repeat units follow at residues 275 to 324, 325 to 371, 374 to 422, and 423 to 466; these read PKAC…WPQL, PNGL…FGFP, VKHI…FPGI, and GHKV…WFNC. Cysteine 278 and cysteine 466 are joined by a disulfide. Ca(2+)-binding residues include aspartate 285 and glutamate 329. Phosphotyrosine; by PKDCC is present on tyrosine 360. Ca(2+) is bound by residues aspartate 378 and aspartate 427.

Belongs to the peptidase M10A family. In terms of assembly, (Microbial infection) Interacts with HIV-1 Tat. It depends on Ca(2+) as a cofactor. Requires Zn(2+) as cofactor. Post-translationally, undergoes autolytic cleavage to two major forms (22 kDa and 27 kDa). A minor form (25 kDa) is the glycosylated form of the 22 kDa form. The 27 kDa form has no activity while the 22/25 kDa form can act as activator for collagenase. Tyrosine phosphorylated in platelets by PKDCC/VLK.

The protein localises to the secreted. Its subcellular location is the extracellular space. The protein resides in the extracellular matrix. It catalyses the reaction Cleavage of the triple helix of collagen at about three-quarters of the length of the molecule from the N-terminus, at 775-Gly-|-Ile-776 in the alpha1(I) chain. Cleaves synthetic substrates and alpha-macroglobulins at bonds where P1' is a hydrophobic residue.. Its activity is regulated as follows. Can be activated without removal of the activation peptide. Functionally, cleaves collagens of types I, II, and III at one site in the helical domain. Also cleaves collagens of types VII and X. In case of HIV infection, interacts and cleaves the secreted viral Tat protein, leading to a decrease in neuronal Tat's mediated neurotoxicity. The polypeptide is Interstitial collagenase (MMP1) (Homo sapiens (Human)).